The chain runs to 321 residues: Protein-L-isoaspartate O-methyltransferase (321 aa).

Residues 21–31 show a composition bias toward basic and acidic residues; the sequence is KPAERQREKRI. Residues 21–65 are disordered; that stretch reads KPAERQREKRISSGVNAVSLPTPARTASAERASSTPAPGPGPQRV. A compositionally biased stretch (low complexity) spans 41-56; sequence PTPARTASAERASSTP. Residue Ser153 is part of the active site.

Belongs to the methyltransferase superfamily. L-isoaspartyl/D-aspartyl protein methyltransferase family.

Its subcellular location is the cytoplasm. The catalysed reaction is [protein]-L-isoaspartate + S-adenosyl-L-methionine = [protein]-L-isoaspartate alpha-methyl ester + S-adenosyl-L-homocysteine. Functionally, catalyzes the methyl esterification of L-isoaspartyl residues in peptides and proteins that result from spontaneous decomposition of normal L-aspartyl and L-asparaginyl residues. It plays a role in the repair and/or degradation of damaged proteins. The protein is Protein-L-isoaspartate O-methyltransferase of Ralstonia nicotianae (strain ATCC BAA-1114 / GMI1000) (Ralstonia solanacearum).